The following is a 228-amino-acid chain: Large ribosomal subunit protein uL3 (228 aa).

The residue at position 151 (glutamine 151) is an N5-methylglutamine.

Belongs to the universal ribosomal protein uL3 family. Part of the 50S ribosomal subunit. Forms a cluster with proteins L14 and L19. Methylated by PrmB.

One of the primary rRNA binding proteins, it binds directly near the 3'-end of the 23S rRNA, where it nucleates assembly of the 50S subunit. In Rhizobium meliloti (strain 1021) (Ensifer meliloti), this protein is Large ribosomal subunit protein uL3.